The following is a 952-amino-acid chain: Ubiquitin carboxyl-terminal hydrolase 15 (952 aa).

At Ala-2 the chain carries N-acetylalanine. The segment at 2-223 (AEGGAADLDI…KNEDGTWPRG (222 aa)) is mediates interaction with SART3. The DUSP domain maps to 7 to 118 (ADLDIQRSDI…GQEPIARKVV (112 aa)). Thr-226 bears the Phosphothreonine mark. The USP domain maps to 260 to 904 (CGLSNLGNTC…AAYVLFYQRQ (645 aa)). Cys-269 serves as the catalytic Nucleophile. The residue at position 573 (Thr-573) is a Phosphothreonine. Residues 598–666 (TEGSLHCCKD…GDNDSENGLC (69 aa)) are disordered. The segment covering 627 to 644 (METDEPDDESSQDQELPS) has biased composition (acidic residues). The Proton acceptor role is filled by His-862. The tract at residues 923-952 (SAATGIPLESDEDSNDNDNDIENENCMHTN) is disordered. Acidic residues predominate over residues 931–945 (ESDEDSNDNDNDIEN). Ser-932 and Ser-936 each carry phosphoserine.

It belongs to the peptidase C19 family. A homodimer structure has been reported; however it is unclear whether the protein form a homodimer in vivo. Identified in a complex with the COP9 signalosome complex (CSN). Interacts with SMAD1, SMAD2 and SMAD3; the interaction is direct. Forms a complex with SMURF2 and SMAD7. Interacts with TGFBR1. Interacts with SART3; the interaction is direct. May interact with RNF20 and RNF40. May interact with PRKN. Interacts with INCA1. Post-translationally, phosphorylated. Phosphorylation protects against ubiquitination and subsequent degradation by the proteasome. In terms of processing, ubiquitinated, leading to degradation by the proteasome.

Its subcellular location is the cytoplasm. The protein resides in the nucleus. The protein localises to the mitochondrion. It catalyses the reaction Thiol-dependent hydrolysis of ester, thioester, amide, peptide and isopeptide bonds formed by the C-terminal Gly of ubiquitin (a 76-residue protein attached to proteins as an intracellular targeting signal).. In terms of biological role, hydrolase that removes conjugated ubiquitin from target proteins and regulates various pathways such as the TGF-beta receptor signaling, NF-kappa-B and RNF41/NRDP1-PRKN pathways. Acts as a key regulator of TGF-beta receptor signaling pathway, but the precise mechanism is still unclear: according to a report, acts by promoting deubiquitination of monoubiquitinated R-SMADs (SMAD1, SMAD2 and/or SMAD3), thereby alleviating inhibition of R-SMADs and promoting activation of TGF-beta target genes. According to another reports, regulates the TGF-beta receptor signaling pathway by mediating deubiquitination and stabilization of TGFBR1, leading to an enhanced TGF-beta signal. Able to mediate deubiquitination of monoubiquitinated substrates, 'Lys-27'-, 'Lys-48'- and 'Lys-63'-linked polyubiquitin chains. May also regulate gene expression and/or DNA repair through the deubiquitination of histone H2B. Acts as an inhibitor of mitophagy by counteracting the action of parkin (PRKN): hydrolyzes cleavage of 'Lys-48'- and 'Lys-63'-linked polyubiquitin chains attached by parkin on target proteins such as MFN2, thereby reducing parkin's ability to drive mitophagy. Acts as an associated component of COP9 signalosome complex (CSN) and regulates different pathways via this association: regulates NF-kappa-B by mediating deubiquitination of NFKBIA and deubiquitinates substrates bound to VCP. Involved in endosome organization by mediating deubiquitination of SQSTM1: ubiquitinated SQSTM1 forms a molecular bridge that restrains cognate vesicles in the perinuclear region and its deubiquitination releases target vesicles for fast transport into the cell periphery. Acts as a negative regulator of antifungal immunity by mediating 'Lys-27'-linked deubiquitination of CARD9, thereby inactivating CARD9. This Bos taurus (Bovine) protein is Ubiquitin carboxyl-terminal hydrolase 15 (USP15).